The primary structure comprises 147 residues: UPF0275 protein PM0504 (147 aa).

Belongs to the UPF0275 family.

This Pasteurella multocida (strain Pm70) protein is UPF0275 protein PM0504.